A 241-amino-acid chain; its full sequence is 1-(5-phosphoribosyl)-5-[(5-phosphoribosylamino)methylideneamino] imidazole-4-carboxamide isomerase (241 aa).

Aspartate 10 acts as the Proton acceptor in catalysis. Aspartate 131 functions as the Proton donor in the catalytic mechanism.

The protein belongs to the HisA/HisF family.

The protein localises to the cytoplasm. It carries out the reaction 1-(5-phospho-beta-D-ribosyl)-5-[(5-phospho-beta-D-ribosylamino)methylideneamino]imidazole-4-carboxamide = 5-[(5-phospho-1-deoxy-D-ribulos-1-ylimino)methylamino]-1-(5-phospho-beta-D-ribosyl)imidazole-4-carboxamide. It participates in amino-acid biosynthesis; L-histidine biosynthesis; L-histidine from 5-phospho-alpha-D-ribose 1-diphosphate: step 4/9. This is 1-(5-phosphoribosyl)-5-[(5-phosphoribosylamino)methylideneamino] imidazole-4-carboxamide isomerase from Bifidobacterium longum (strain DJO10A).